We begin with the raw amino-acid sequence, 708 residues long: Fatty acid oxidation complex subunit alpha (708 aa).

The tract at residues 1 to 191 (MDNNNAFQLS…KLGVVDACVP (191 aa)) is enoyl-CoA hydratase. A 3-hydroxyacyl-CoA dehydrogenase region spans residues 311–708 (APVAAVGVLG…RAGLGEKFYP (398 aa)).

This sequence in the N-terminal section; belongs to the enoyl-CoA hydratase/isomerase family. In the central section; belongs to the 3-hydroxyacyl-CoA dehydrogenase family. In terms of assembly, heterotetramer of two alpha chains (FadJ) and two beta chains (FadI).

Its subcellular location is the cytoplasm. The catalysed reaction is a (3S)-3-hydroxyacyl-CoA = a (2E)-enoyl-CoA + H2O. The enzyme catalyses a 4-saturated-(3S)-3-hydroxyacyl-CoA = a (3E)-enoyl-CoA + H2O. It carries out the reaction a (3S)-3-hydroxyacyl-CoA + NAD(+) = a 3-oxoacyl-CoA + NADH + H(+). It catalyses the reaction (3S)-3-hydroxybutanoyl-CoA = (3R)-3-hydroxybutanoyl-CoA. It functions in the pathway lipid metabolism; fatty acid beta-oxidation. Functionally, catalyzes the formation of a hydroxyacyl-CoA by addition of water on enoyl-CoA. Also exhibits 3-hydroxyacyl-CoA epimerase and 3-hydroxyacyl-CoA dehydrogenase activities. The protein is Fatty acid oxidation complex subunit alpha of Vibrio cholerae serotype O1 (strain ATCC 39315 / El Tor Inaba N16961).